A 283-amino-acid chain; its full sequence is Plasma membrane ascorbate-dependent reductase CYBRD1 (283 aa).

Over 1–5 (MEGYK) the chain is Cytoplasmic. The helical transmembrane segment at 6–30 (SFLAFLVSSLLLGFLGVIFTLVWVL) threads the bilayer. Positions 13-218 (SSLLLGFLGV…FGGLVVWMVT (206 aa)) constitute a Cytochrome b561 domain. Residues 31–45 (HWREGLGWDGGAAEF) lie on the Extracellular side of the membrane. A helical transmembrane segment spans residues 46–67 (NWHPVLVTSGFIFIQGIAIIVY). His-48, Arg-68, and Lys-77 together coordinate heme b. Over 68–76 (RLPWTWKCS) the chain is Cytoplasmic. The L-ascorbate site is built by Lys-77 and Lys-81. A helical membrane pass occupies residues 77-103 (KLLMKFIHAGLHLTALIFTIVALVAVF). Residue His-84 participates in heme b binding. Residues 104–116 (DFHNAKNIPNMYS) lie on the Extracellular side of the membrane. Fe(3+) is bound at residue His-106. Heme b is bound by residues 113-116 (NMYS) and His-118. The helical transmembrane segment at 117 to 142 (LHSWIGLTVVILYALQLVLGVSIYLL) threads the bilayer. At 143–149 (PFASNTL) the chain is on the cytoplasmic side. Arg-150 contributes to the L-ascorbate binding site. The chain crosses the membrane as a helical span at residues 150-177 (RAALMPVHVYSGLFIFGTVIATALMGIT). Residues His-157 and Glu-178 each coordinate heme b. The Extracellular portion of the chain corresponds to 178-195 (EKLIFSLKEPPYSKLPPE). A helical transmembrane segment spans residues 196-220 (AIFVNTFGLLILVFGGLVVWMVTTP). At 221 to 283 (AWKRPREQGM…LDEAGQRSTM (63 aa)) the chain is on the cytoplasmic side. Lys-223 is a heme b binding site. The disordered stretch occupies residues 234–262 (SPTVSSPDETEEGSTITDCSNTEKSDVEL). Polar residues predominate over residues 235–253 (PTVSSPDETEEGSTITDCS).

In terms of assembly, homodimer. It depends on heme b as a cofactor.

It is found in the cell membrane. Its subcellular location is the apical cell membrane. The catalysed reaction is Fe(3+)(out) + L-ascorbate(in) = monodehydro-L-ascorbate radical(in) + Fe(2+)(out) + H(+). It catalyses the reaction Cu(2+)(out) + L-ascorbate(in) = Cu(+)(out) + monodehydro-L-ascorbate radical(in) + H(+). It carries out the reaction monodehydro-L-ascorbate radical(out) + L-ascorbate(in) = monodehydro-L-ascorbate radical(in) + L-ascorbate(out). Its function is as follows. Plasma membrane reductase that uses cytoplasmic ascorbate as an electron donor to reduce extracellular Fe(3+) into Fe(2+). It is also able to reduce extracellular monodehydro-L-ascorbate and may be involved in extracellular ascorbate regeneration. May also function as a cupric transmembrane reductase. This is Plasma membrane ascorbate-dependent reductase CYBRD1 (cybrd1) from Xenopus laevis (African clawed frog).